The primary structure comprises 103 residues: G0/G1 switch protein 2 (103 aa).

Residues 80 to 103 are disordered; that stretch reads LQEKGKQQDTVLGGRALSNRQHAS.

Directly interacts with BCL2; this interaction prevents the formation of the anti-apoptotic BAX-BCL2 complex. Widely expressed with highest levels in peripheral blood, skeletal muscle and heart, followed by kidney and liver.

It is found in the mitochondrion. In terms of biological role, promotes apoptosis by binding to BCL2, hence preventing the formation of protective BCL2-BAX heterodimers. This Homo sapiens (Human) protein is G0/G1 switch protein 2 (G0S2).